We begin with the raw amino-acid sequence, 202 residues long: MNSAIEEQLATNLYYDRNFDCETAKILPGEYYFTAKPMLIVTVLGSCVAACIRDRVSGIGGMNHFMLPDGGGDPGNPLSASMRYGAYAMEVLINQLLKAGARRENLEAKVFGGGNVLRGFTTMNVGERNAQFVRDFLRAENIRVVAEDLNDVHPRKVYFFPRTGRVLVKKLKQLNNYTLVKREQDYASRLKSNVVAGEVDLF.

Belongs to the CheD family.

The enzyme catalyses L-glutaminyl-[protein] + H2O = L-glutamyl-[protein] + NH4(+). Its function is as follows. Probably deamidates glutamine residues to glutamate on methyl-accepting chemotaxis receptors (MCPs), playing an important role in chemotaxis. The sequence is that of Probable chemoreceptor glutamine deamidase CheD from Thiobacillus denitrificans (strain ATCC 25259 / T1).